The following is a 412-amino-acid chain: Multifunctional CCA protein (412 aa).

ATP is bound by residues glycine 8 and arginine 11. Residues glycine 8 and arginine 11 each coordinate CTP. Mg(2+) contacts are provided by aspartate 21 and aspartate 23. Positions 91, 137, and 140 each coordinate ATP. Residues arginine 91, arginine 137, and arginine 140 each contribute to the CTP site. The HD domain occupies 228 to 329; the sequence is TGIHTLMTLS…VKLFDSIDAW (102 aa).

It belongs to the tRNA nucleotidyltransferase/poly(A) polymerase family. Bacterial CCA-adding enzyme type 1 subfamily. As to quaternary structure, monomer. Can also form homodimers and oligomers. Requires Mg(2+) as cofactor. Ni(2+) is required as a cofactor.

It catalyses the reaction a tRNA precursor + 2 CTP + ATP = a tRNA with a 3' CCA end + 3 diphosphate. The catalysed reaction is a tRNA with a 3' CCA end + 2 CTP + ATP = a tRNA with a 3' CCACCA end + 3 diphosphate. Its function is as follows. Catalyzes the addition and repair of the essential 3'-terminal CCA sequence in tRNAs without using a nucleic acid template. Adds these three nucleotides in the order of C, C, and A to the tRNA nucleotide-73, using CTP and ATP as substrates and producing inorganic pyrophosphate. tRNA 3'-terminal CCA addition is required both for tRNA processing and repair. Also involved in tRNA surveillance by mediating tandem CCA addition to generate a CCACCA at the 3' terminus of unstable tRNAs. While stable tRNAs receive only 3'-terminal CCA, unstable tRNAs are marked with CCACCA and rapidly degraded. The polypeptide is Multifunctional CCA protein (Escherichia coli O6:H1 (strain CFT073 / ATCC 700928 / UPEC)).